Consider the following 660-residue polypeptide: Interferon-induced GTP-binding protein Mx1 (660 aa).

Residue methionine 1 is modified to N-acetylmethionine. Residues 1–10 (MVHSEAKMTR) show a composition bias toward basic and acidic residues. A disordered region spans residues 1-29 (MVHSEAKMTRPDSASASKQQLLNGNADIQ). A compositionally biased stretch (polar residues) spans 12-29 (DSASASKQQLLNGNADIQ). In terms of domain architecture, Dynamin-type G spans 67 to 340 (DLALPAIAVI…LITHISKSLP (274 aa)). The interval 77–84 (GDQSSGKS) is G1 motif. 77-84 (GDQSSGKS) lines the GTP pocket. Residues 102–104 (VTR) are G2 motif. Residues 178–181 (DLPG) are G3 motif. Residues 178 to 182 (DLPGI) and 247 to 250 (TKPD) contribute to the GTP site. Residues 247–250 (TKPD) are G4 motif. The tract at residues 279-282 (KCRG) is G5 motif. The interval 341–366 (LLENQIKESYQNLSDELQKYGTDIPE) is bundle signaling element (BSE). The segment at 366–533 (EDETEKTFFL…HFQMEKIVYC (168 aa)) is middle domain. Positions 367–630 (DETEKTFFLI…RDTYDWLLKE (264 aa)) are stalk. The interval 554 to 557 (KKKK) is critical for lipid-binding. A GED domain is found at 572 to 660 (MAEILEHLNA…ARRRLAKFPG (89 aa)).

This sequence belongs to the TRAFAC class dynamin-like GTPase superfamily. Dynamin/Fzo/YdjA family. In terms of assembly, homooligomer. Oligomerizes into multimeric filamentous or ring-like structures by virtue of its stalk domain. Oligomerization is critical for GTPase activity, protein stability, and recognition of viral target structures. Interacts with TRPC1, TRPC3, TRPC4, TRPC5, TRPC6 and TRPC7. Interacts with HSPA5. Interacts with TUBB/TUBB5. Interacts with DDX39A and DDX39B. In terms of processing, ISGylated.

It is found in the cytoplasm. It localises to the endoplasmic reticulum membrane. Its subcellular location is the perinuclear region. Interferon-induced dynamin-like GTPase with antiviral activity. The sequence is that of Interferon-induced GTP-binding protein Mx1 (MX1) from Equus caballus (Horse).